Consider the following 254-residue polypeptide: tRNA pseudouridine synthase A (254 aa).

The Nucleophile role is filled by Asp52. Substrate is bound at residue Tyr110.

Belongs to the tRNA pseudouridine synthase TruA family. Homodimer.

It catalyses the reaction uridine(38/39/40) in tRNA = pseudouridine(38/39/40) in tRNA. Formation of pseudouridine at positions 38, 39 and 40 in the anticodon stem and loop of transfer RNAs. The chain is tRNA pseudouridine synthase A from Thermodesulfovibrio yellowstonii (strain ATCC 51303 / DSM 11347 / YP87).